Consider the following 212-residue polypeptide: 3,4-dihydroxy-2-butanone 4-phosphate synthase (212 aa).

Residues R37–E38, D42, R150–T154, and E174 each bind D-ribulose 5-phosphate. Mg(2+) is bound at residue E38. H153 is a Mg(2+) binding site.

The protein belongs to the DHBP synthase family. As to quaternary structure, homodimer. Mg(2+) is required as a cofactor. Mn(2+) serves as cofactor.

It catalyses the reaction D-ribulose 5-phosphate = (2S)-2-hydroxy-3-oxobutyl phosphate + formate + H(+). It functions in the pathway cofactor biosynthesis; riboflavin biosynthesis; 2-hydroxy-3-oxobutyl phosphate from D-ribulose 5-phosphate: step 1/1. Its function is as follows. Catalyzes the conversion of D-ribulose 5-phosphate to formate and 3,4-dihydroxy-2-butanone 4-phosphate. The polypeptide is 3,4-dihydroxy-2-butanone 4-phosphate synthase (Shewanella halifaxensis (strain HAW-EB4)).